The sequence spans 101 residues: Chaperone modulatory protein CbpM (101 aa).

This sequence belongs to the CbpM family.

Its function is as follows. Interacts with CbpA and inhibits both the DnaJ-like co-chaperone activity and the DNA binding activity of CbpA. Together with CbpA, modulates the activity of the DnaK chaperone system. Does not inhibit the co-chaperone activity of DnaJ. This is Chaperone modulatory protein CbpM from Pseudomonas putida (strain W619).